The chain runs to 427 residues: Gamma-glutamyl phosphate reductase (427 aa).

It belongs to the gamma-glutamyl phosphate reductase family.

It is found in the cytoplasm. The enzyme catalyses L-glutamate 5-semialdehyde + phosphate + NADP(+) = L-glutamyl 5-phosphate + NADPH + H(+). Its pathway is amino-acid biosynthesis; L-proline biosynthesis; L-glutamate 5-semialdehyde from L-glutamate: step 2/2. In terms of biological role, catalyzes the NADPH-dependent reduction of L-glutamate 5-phosphate into L-glutamate 5-semialdehyde and phosphate. The product spontaneously undergoes cyclization to form 1-pyrroline-5-carboxylate. The protein is Gamma-glutamyl phosphate reductase of Anaeromyxobacter sp. (strain K).